Here is a 129-residue protein sequence, read N- to C-terminus: Glycine cleavage system H protein (129 aa).

The Lipoyl-binding domain maps to 24–106; the sequence is SYTVGISEHA…YGDGWFFRIM (83 aa). Lys-65 bears the N6-lipoyllysine mark.

This sequence belongs to the GcvH family. As to quaternary structure, the glycine cleavage system is composed of four proteins: P, T, L and H. (R)-lipoate serves as cofactor.

Functionally, the glycine cleavage system catalyzes the degradation of glycine. The H protein shuttles the methylamine group of glycine from the P protein to the T protein. In Shewanella loihica (strain ATCC BAA-1088 / PV-4), this protein is Glycine cleavage system H protein.